The sequence spans 1062 residues: 3-hydroxy-3-methylglutaryl-coenzyme A reductase 2 (1062 aa).

The Cytoplasmic portion of the chain corresponds to 1-34; it reads MAPTNTKDSDTPGWLHRHGTSVLGSVARQACKQP. The helical transmembrane segment at 35-55 threads the bilayer; the sequence is IYTLVITALLATMTYTSLLEG. Over 56–230 the chain is Lumenal; that stretch reads SLYNANLTRL…SFVGLIKHAQ (175 aa). N-linked (GlcNAc...) asparagine glycosylation is present at Asn-61. Residues 231-251 form a helical membrane-spanning segment; the sequence is IIDIIIMLLAYLAMHLTFLSL. Residues 233–403 enclose the SSD domain; it reads DIIIMLLAYL…FTFYISVLCV (171 aa). Topologically, residues 252 to 261 are cytoplasmic; that stretch reads FMSMRQLGSR. The chain crosses the membrane as a helical span at residues 262–282; it reads FWLAYSVLLSGFFSLFFGLKV. Topologically, residues 283-287 are lumenal; it reads TTSSG. A helical membrane pass occupies residues 288–308; it reads VSTSMITLSECLPILVIIVGF. At 309 to 355 the chain is on the cytoplasmic side; it reads EKPIRLTRAVLRAATESYLPAKPMARRSTPEAIEVAIMREGWRIVRD. The chain crosses the membrane as a helical span at residues 356 to 375; sequence YAIEIAILAAGATSRVQGAL. Over 376 to 377 the chain is Lumenal; that stretch reads PQ. The chain crosses the membrane as a helical span at residues 378-398; it reads FCFLAAWILLFDSLLLFTFYI. Residues 399–450 lie on the Cytoplasmic side of the membrane; the sequence is SVLCVKLEITRIRKHVEPRRALEDDDISTGNQDFDSRVFGCKVKAANISRFK. The helical transmembrane segment at 451 to 471 threads the bilayer; sequence FLMVGGFVLFNVLQLSSLTYG. Residues 472 to 564 lie on the Lumenal side of the membrane; sequence NVRVSDWMPY…GCVLAWLEDP (93 aa). The N-linked (GlcNAc...) asparagine glycan is linked to Asn-484. A helical membrane pass occupies residues 565–585; sequence VISKWVIAALFLSLVLNSYLM. Residues 586 to 1062 lie on the Cytoplasmic side of the membrane; that stretch reads KAARWNLRQS…NRSKVAAKTG (477 aa). The active-site Charge relay system is the Glu-744. Position 750–756 (750–756) interacts with CoA; it reads SASRGCK. NADP(+) is bound by residues 811–813 and 838–846; these read SRF and DAMGMNMIS. The active-site Charge relay system is Lys-877. Position 906-908 (906-908) interacts with CoA; that stretch reads VLK. The Charge relay system role is filled by Asp-953. Residue 1048–1049 participates in CoA binding; sequence AH. His-1049 serves as the catalytic Proton donor. Residue 1053 to 1054 participates in NADP(+) binding; sequence NR.

It belongs to the HMG-CoA reductase family.

The protein resides in the endoplasmic reticulum membrane. The catalysed reaction is (R)-mevalonate + 2 NADP(+) + CoA = (3S)-3-hydroxy-3-methylglutaryl-CoA + 2 NADPH + 2 H(+). Its pathway is metabolic intermediate biosynthesis; (R)-mevalonate biosynthesis; (R)-mevalonate from acetyl-CoA: step 3/3. In terms of biological role, HMG-CoA reductase; part of the first module of ergosterol biosynthesis pathway that includes the early steps of the pathway, conserved across all eukaryotes, and which results in the formation of mevalonate from acetyl-coenzyme A (acetyl-CoA). Hmg1 and hmg2 catalyze the reduction of hydroxymethylglutaryl-CoA (HMG-CoA) to mevalonate. The first module starts with the action of the cytosolic acetyl-CoA acetyltransferase erg10B that catalyzes the formation of acetoacetyl-CoA. The hydroxymethylglutaryl-CoA synthases erg13A and erg13B then condense acetyl-CoA with acetoacetyl-CoA to form HMG-CoA. The rate-limiting step of the early module is the reduction to mevalonate by the 3-hydroxy-3-methylglutaryl-coenzyme A (HMG-CoA) reductases hmg1 and hmg2. Mevalonate is also a precursor for the extracellular siderophore triacetylfusarinine C (TAFC). The protein is 3-hydroxy-3-methylglutaryl-coenzyme A reductase 2 of Aspergillus fumigatus (strain ATCC MYA-4609 / CBS 101355 / FGSC A1100 / Af293) (Neosartorya fumigata).